A 260-amino-acid chain; its full sequence is 5'-nucleotidase SurE (260 aa).

A divalent metal cation contacts are provided by Asp19, Asp20, Ser51, and Asn104.

It belongs to the SurE nucleotidase family. The cofactor is a divalent metal cation.

The protein resides in the cytoplasm. It catalyses the reaction a ribonucleoside 5'-phosphate + H2O = a ribonucleoside + phosphate. In terms of biological role, nucleotidase that shows phosphatase activity on nucleoside 5'-monophosphates. The protein is 5'-nucleotidase SurE of Paramagnetospirillum magneticum (strain ATCC 700264 / AMB-1) (Magnetospirillum magneticum).